Reading from the N-terminus, the 136-residue chain is Pterin-4-alpha-carbinolamine dehydratase 2 (136 aa).

N6-acetyllysine; alternate occurs at positions 120, 124, and 131. N6-succinyllysine; alternate occurs at positions 120, 124, and 131.

This sequence belongs to the pterin-4-alpha-carbinolamine dehydratase family. Homotetramer. Interacts with DYRK1B.

It catalyses the reaction (4aS,6R)-4a-hydroxy-L-erythro-5,6,7,8-tetrahydrobiopterin = (6R)-L-erythro-6,7-dihydrobiopterin + H2O. Involved in tetrahydrobiopterin biosynthesis. Seems to both prevent the formation of 7-pterins and accelerate the formation of quinonoid-BH2. Functionally, regulates the dimerization of homeodomain protein HNF-1-alpha and enhances its transcriptional activity. The polypeptide is Pterin-4-alpha-carbinolamine dehydratase 2 (Pcbd2) (Mus musculus (Mouse)).